The chain runs to 254 residues: Thiazole synthase (254 aa).

Residue Lys96 is the Schiff-base intermediate with DXP of the active site. 1-deoxy-D-xylulose 5-phosphate contacts are provided by residues Gly157, 183–184, and 205–206; these read AG and NT.

The protein belongs to the ThiG family. In terms of assembly, homotetramer. Forms heterodimers with either ThiH or ThiS.

It localises to the cytoplasm. The enzyme catalyses [ThiS sulfur-carrier protein]-C-terminal-Gly-aminoethanethioate + 2-iminoacetate + 1-deoxy-D-xylulose 5-phosphate = [ThiS sulfur-carrier protein]-C-terminal Gly-Gly + 2-[(2R,5Z)-2-carboxy-4-methylthiazol-5(2H)-ylidene]ethyl phosphate + 2 H2O + H(+). Its pathway is cofactor biosynthesis; thiamine diphosphate biosynthesis. Its function is as follows. Catalyzes the rearrangement of 1-deoxy-D-xylulose 5-phosphate (DXP) to produce the thiazole phosphate moiety of thiamine. Sulfur is provided by the thiocarboxylate moiety of the carrier protein ThiS. In vitro, sulfur can be provided by H(2)S. The chain is Thiazole synthase from Clostridium perfringens (strain SM101 / Type A).